A 565-amino-acid chain; its full sequence is Glucose starvation modulator protein 1 (565 aa).

The zn(2)-C6 fungal-type DNA-binding region spans 20 to 48 (CVFCHQKHLQCSNERPCKNCVKRNIAHGC). Disordered stretches follow at residues 63-106 (GVSG…ESSN) and 250-269 (QVSPSPSNTSTSENNTNTLS). Residues 82–93 (SPLSTSMSPTDS) are compositionally biased toward polar residues. Positions 252–269 (SPSPSNTSTSENNTNTLS) are enriched in low complexity.

This sequence belongs to the ERT1/acuK family.

It localises to the nucleus. In terms of biological role, transcription factor which regulates nonfermentable carbon utilization. This is Glucose starvation modulator protein 1 (GSM1) from Candida dubliniensis (strain CD36 / ATCC MYA-646 / CBS 7987 / NCPF 3949 / NRRL Y-17841) (Yeast).